Reading from the N-terminus, the 166-residue chain is Large ribosomal subunit protein uL11 (166 aa).

The protein belongs to the universal ribosomal protein uL11 family. In terms of assembly, part of the ribosomal stalk of the 50S ribosomal subunit. Interacts with L10 and the large rRNA to form the base of the stalk. L10 forms an elongated spine to which L12 dimers bind in a sequential fashion forming a multimeric L10(L12)X complex.

Its function is as follows. Forms part of the ribosomal stalk which helps the ribosome interact with GTP-bound translation factors. The protein is Large ribosomal subunit protein uL11 of Methanopyrus kandleri (strain AV19 / DSM 6324 / JCM 9639 / NBRC 100938).